The primary structure comprises 404 residues: Cysteine desulfurase IscS (404 aa).

Pyridoxal 5'-phosphate is bound by residues 75–76, N155, Q183, and 203–205; these read AT and SGH. K206 bears the N6-(pyridoxal phosphate)lysine mark. T243 lines the pyridoxal 5'-phosphate pocket. C328 serves as the catalytic Cysteine persulfide intermediate. [2Fe-2S] cluster is bound at residue C328.

Belongs to the class-V pyridoxal-phosphate-dependent aminotransferase family. NifS/IscS subfamily. Homodimer. Forms a heterotetramer with IscU, interacts with other sulfur acceptors. Pyridoxal 5'-phosphate serves as cofactor.

It localises to the cytoplasm. The catalysed reaction is (sulfur carrier)-H + L-cysteine = (sulfur carrier)-SH + L-alanine. It functions in the pathway cofactor biosynthesis; iron-sulfur cluster biosynthesis. Master enzyme that delivers sulfur to a number of partners involved in Fe-S cluster assembly, tRNA modification or cofactor biosynthesis. Catalyzes the removal of elemental sulfur atoms from cysteine to produce alanine. Functions as a sulfur delivery protein for Fe-S cluster synthesis onto IscU, an Fe-S scaffold assembly protein, as well as other S acceptor proteins. This is Cysteine desulfurase IscS from Shewanella oneidensis (strain ATCC 700550 / JCM 31522 / CIP 106686 / LMG 19005 / NCIMB 14063 / MR-1).